Reading from the N-terminus, the 326-residue chain is Glycolipid sulfotransferase MRA_1383 (326 aa).

40-45 (KSGLTW) lines the 3'-phosphoadenylyl sulfate pocket. His-97 functions as the Proton acceptor in the catalytic mechanism. Position 116-124 (116-124 (RDPRDAAVS)) interacts with 3'-phosphoadenylyl sulfate.

Belongs to the sulfotransferase 1 family.

Functionally, involved in the synthesis of cell wall sulfolipids. This Mycobacterium tuberculosis (strain ATCC 25177 / H37Ra) protein is Glycolipid sulfotransferase MRA_1383.